Reading from the N-terminus, the 68-residue chain is Large ribosomal subunit protein uL29 (68 aa).

It belongs to the universal ribosomal protein uL29 family.

The protein is Large ribosomal subunit protein uL29 of Chloroflexus aggregans (strain MD-66 / DSM 9485).